The following is a 442-amino-acid chain: UDP-N-acetylmuramoylalanine--D-glutamate ligase (442 aa).

Residue 115-121 (GSNGKST) participates in ATP binding.

It belongs to the MurCDEF family.

The protein localises to the cytoplasm. The catalysed reaction is UDP-N-acetyl-alpha-D-muramoyl-L-alanine + D-glutamate + ATP = UDP-N-acetyl-alpha-D-muramoyl-L-alanyl-D-glutamate + ADP + phosphate + H(+). The protein operates within cell wall biogenesis; peptidoglycan biosynthesis. Its function is as follows. Cell wall formation. Catalyzes the addition of glutamate to the nucleotide precursor UDP-N-acetylmuramoyl-L-alanine (UMA). In Vibrio vulnificus (strain YJ016), this protein is UDP-N-acetylmuramoylalanine--D-glutamate ligase.